Reading from the N-terminus, the 961-residue chain is MHGHRAPGGAGPSEPEHPATNPPGAAPPACADSDPGASEPGLLARRGSGSALGGPLDPQFVGPSDTSLGAAPGHRVLPCGPSPQHHRALRFSYHLEGSQPRPGLHQGNRILVKSLSLDPGQSLEPHPEGPQRLRSDPGPPTETPSQRPSPLKRAPGPKPQVPPKPSYLQMPRMPPPLEPIPPPPSRPLPADPRVAKGLAPRAEASPSSAAVSSLIEKFEREPVIVASDRPVPGPSPGPPEPVMLPQPTSQPPVPQLPEGEASRCLFLLAPGPRDGEKVPNRDSGIDSISSPSNSEETCFVSDDGPPSHSLCPGPPALASVPVALADPHRPGSQEVDSDLEEEDDEEEEEEKDREIPVPLMERQESVELTVQQKVFHIANELLQTEKAYVSRLHLLDQVFCARLLEEARNRSSFPADVVHGIFSNICSIYCFHQQFLLPELEKRMEEWDRYPRIGDILQKLAPFLKMYGEYVKNFDRAVELVNTWTERSTQFKVIIHEVQKEEACGNLTLQHHMLEPVQRIPRYELLLKDYLLKLPHGSPDSKDAQKSLELIATAAEHSNAAIRKMERMHKLLKVYELLGGEEDIVSPTKELIKEGHILKLSAKNGTTQDRYLILFNDRLLYCVPRLRLLGQKFSVRARIDVDGMELKESSNLNLPRTFLVSGKQRSLELQARTEEEKKDWVQAINSTLLKHEQTLETFKLLNSTNREDEDTPPNSPNVDLGKRAPTPIREKEVTMCMRCQEPFNSITKRRHHCKACGHVVCGKCSEFRARLVYDNNRSNRVCTDCYVALHGVPGSSPACSQHTPQRRRSILEKQASVAAENSVICSFLHYMEKGGKGWHKAWFVVPENEPLVLYIYGAPQDVKAQRSLPLIGFEVGPPEAGERPDRRHVFKITQSHLSWYFSPETEELQRRWMAVLGRAGRGDTFCPGPTLSEDREMEEAPVAALGATAEPPESPQTRDKT.

A compositionally biased stretch (gly residues) spans 1-11; sequence MHGHRAPGGAG. The interval 1-353 is disordered; it reads MHGHRAPGGA…DEEEEEEKDR (353 aa). The segment covering 27–38 has biased composition (low complexity); sequence PPACADSDPGAS. Ser48 is modified (phosphoserine). Residues 125–135 are compositionally biased toward basic and acidic residues; that stretch reads PHPEGPQRLRS. Pro residues-rich tracts occupy residues 156 to 165 and 172 to 190; these read GPKPQVPPKP and RMPPPLEPIPPPPSRPLPA. Residues 171 to 187 carry the SH3-binding motif; that stretch reads PRMPPPLEPIPPPPSRP. Residues 199-213 show a composition bias toward low complexity; that stretch reads APRAEASPSSAAVSS. At Ser205 the chain carries Phosphoserine. A compositionally biased stretch (pro residues) spans 231 to 255; that stretch reads VPGPSPGPPEPVMLPQPTSQPPVPQ. Over residues 273–284 the composition is skewed to basic and acidic residues; it reads RDGEKVPNRDSG. Low complexity-rich tracts occupy residues 285 to 294 and 316 to 325; these read IDSISSPSNS and ALASVPVALA. Residues 335 to 351 show a composition bias toward acidic residues; sequence VDSDLEEEDDEEEEEEK. In terms of domain architecture, DH spans 373–561; it reads KVFHIANELL…ATAAEHSNAA (189 aa). A PH 1 domain is found at 590-689; the sequence is ELIKEGHILK…WVQAINSTLL (100 aa). The segment at 702-726 is disordered; it reads NSTNREDEDTPPNSPNVDLGKRAPT. Thr711 is modified (phosphothreonine). At Ser715 the chain carries Phosphoserine. The segment at 730-790 adopts an FYVE-type zinc-finger fold; sequence EKEVTMCMRC…VCTDCYVALH (61 aa). Cys736, Cys739, Cys753, Cys756, Cys761, Cys764, Cys782, and Cys785 together coordinate Zn(2+). One can recognise a PH 2 domain in the interval 821–921; sequence NSVICSFLHY…WMAVLGRAGR (101 aa). Residues 925 to 961 form a disordered region; that stretch reads FCPGPTLSEDREMEEAPVAALGATAEPPESPQTRDKT.

As to quaternary structure, interacts with DBNL/ABP1 and CTTN. May interact with CCPG1. Binds CDC42. In terms of tissue distribution, expressed in fetal heart, brain, lung, kidney and placenta. Less expressed in liver; adult heart, brain, lung, pancreas and skeletal muscle.

Its subcellular location is the cytoplasm. The protein localises to the cell projection. It is found in the lamellipodium. It localises to the ruffle. The protein resides in the cytoskeleton. Functionally, activates CDC42, a member of the Ras-like family of Rho- and Rac proteins, by exchanging bound GDP for free GTP. Plays a role in regulating the actin cytoskeleton and cell shape. This chain is FYVE, RhoGEF and PH domain-containing protein 1 (FGD1), found in Homo sapiens (Human).